Here is a 972-residue protein sequence, read N- to C-terminus: Protein NRDE2 homolog (972 aa).

The segment covering 1–17 has biased composition (polar residues); that stretch reads MPSNHNTSVPKFSSFNS. A disordered region spans residues 1–61; the sequence is MPSNHNTSVP…RSIQSNFAVD (61 aa). Over residues 19-33 the composition is skewed to basic residues; that stretch reads KAKKNPITKSNKKYR. Residues 37 to 59 show a composition bias toward polar residues; sequence DQVSSNHAKSSFPSHRSIQSNFA. HAT repeat units lie at residues 159–191, 250–282, 318–350, 355–386, 608–640, 788–820, and 860–894; these read LNILKAIKETDEEIKKNPGKARLWIKMCEYQER, WSKEETNQKFEEVLIEHPGYLNLWMKYAEYFTG, TDVTSNFEVEEAILHLLIRLCDFLKNCGYYELA, QANMELCYFYPRYLEKKLDSTFFESFSKFWNS, EEKPQVNKIVKKILKKYDSSVSVWNTYAQLEHL, YNLPKVRPFFEKGVTLFSANTAIWEVYIFFESK, and TNSQYFLRTLDITLNNEKLKSVAKFWRIYLKILNL. Position 970 is a phosphoserine (Ser970).

The protein belongs to the NRDE2 family.

The protein resides in the nucleus. The sequence is that of Protein NRDE2 homolog from Schizosaccharomyces pombe (strain 972 / ATCC 24843) (Fission yeast).